The chain runs to 447 residues: Phosphoglucosamine mutase (447 aa).

The Phosphoserine intermediate role is filled by S103. Mg(2+)-binding residues include S103, D242, D244, and D246. S103 is subject to Phosphoserine.

It belongs to the phosphohexose mutase family. The cofactor is Mg(2+). Post-translationally, activated by phosphorylation.

The enzyme catalyses alpha-D-glucosamine 1-phosphate = D-glucosamine 6-phosphate. Its function is as follows. Catalyzes the conversion of glucosamine-6-phosphate to glucosamine-1-phosphate. The polypeptide is Phosphoglucosamine mutase (Cereibacter sphaeroides (strain ATCC 17025 / ATH 2.4.3) (Rhodobacter sphaeroides)).